We begin with the raw amino-acid sequence, 129 residues long: Selenoprotein M (129 aa).

The signal sequence occupies residues 1-19; the sequence is MARGLAVFFLLAGACLALA. Active-site nucleophile residues include cysteine 35 and selenocysteine 38. A non-standard amino acid (selenocysteine) is located at residue selenocysteine 38. The interval 107–129 is disordered; sequence KSSKDEQVPEEYQEGPYMEKEEL. A Prevents secretion from ER motif is present at residues 126–129; sequence KEEL.

This sequence belongs to the selenoprotein M/F family. High expression levels observed in hepatopancreas, testis, ovaries and intestine. Also expressed in heart, stomach, gills, cranial ganglia, muscle and hematocytes.

Its subcellular location is the endoplasmic reticulum. Functionally, may function as a thiol-disulfide oxidoreductase that participates in disulfide bond formation. Involved in the regulation of reproduction during the period of rapid gonadal development. This Eriocheir sinensis (Chinese mitten crab) protein is Selenoprotein M.